We begin with the raw amino-acid sequence, 62 residues long: Large ribosomal subunit protein uL30 (62 aa).

The protein belongs to the universal ribosomal protein uL30 family. In terms of assembly, part of the 50S ribosomal subunit.

This Paracoccus denitrificans (strain Pd 1222) protein is Large ribosomal subunit protein uL30.